Consider the following 273-residue polypeptide: Diaminopimelate epimerase (273 aa).

Residues Asn-11 and Asn-60 each contribute to the substrate site. Cys-69 functions as the Proton donor in the catalytic mechanism. Substrate-binding positions include Gly-70–Asn-71, Asn-181, and Glu-199–Arg-200. The active-site Proton acceptor is the Cys-209. Residue Gly-210–Thr-211 coordinates substrate.

It belongs to the diaminopimelate epimerase family. In terms of assembly, homodimer.

The protein localises to the cytoplasm. The catalysed reaction is (2S,6S)-2,6-diaminopimelate = meso-2,6-diaminopimelate. It participates in amino-acid biosynthesis; L-lysine biosynthesis via DAP pathway; DL-2,6-diaminopimelate from LL-2,6-diaminopimelate: step 1/1. Functionally, catalyzes the stereoinversion of LL-2,6-diaminopimelate (L,L-DAP) to meso-diaminopimelate (meso-DAP), a precursor of L-lysine and an essential component of the bacterial peptidoglycan. In Helicobacter pylori (strain Shi470), this protein is Diaminopimelate epimerase.